Here is a 567-residue protein sequence, read N- to C-terminus: Proline--tRNA ligase (567 aa).

It belongs to the class-II aminoacyl-tRNA synthetase family. ProS type 1 subfamily. As to quaternary structure, homodimer.

It localises to the cytoplasm. It carries out the reaction tRNA(Pro) + L-proline + ATP = L-prolyl-tRNA(Pro) + AMP + diphosphate. Catalyzes the attachment of proline to tRNA(Pro) in a two-step reaction: proline is first activated by ATP to form Pro-AMP and then transferred to the acceptor end of tRNA(Pro). As ProRS can inadvertently accommodate and process non-cognate amino acids such as alanine and cysteine, to avoid such errors it has two additional distinct editing activities against alanine. One activity is designated as 'pretransfer' editing and involves the tRNA(Pro)-independent hydrolysis of activated Ala-AMP. The other activity is designated 'posttransfer' editing and involves deacylation of mischarged Ala-tRNA(Pro). The misacylated Cys-tRNA(Pro) is not edited by ProRS. The protein is Proline--tRNA ligase of Fusobacterium nucleatum subsp. nucleatum (strain ATCC 25586 / DSM 15643 / BCRC 10681 / CIP 101130 / JCM 8532 / KCTC 2640 / LMG 13131 / VPI 4355).